The primary structure comprises 209 residues: Ras-related protein Rab-2-A (209 aa).

A GTP-binding site is contributed by 13–21 (GDTGVGKSC). Residues 35-43 (HDLTIGVEF) carry the Effector region motif. GTP is bound by residues 61–65 (DTAGQ), 119–122 (NKCD), and 149–151 (SAK). S-geranylgeranyl cysteine attachment occurs at residues Cys207 and Cys208.

This sequence belongs to the small GTPase superfamily. Rab family.

It localises to the endoplasmic reticulum membrane. Its subcellular location is the golgi apparatus membrane. Its function is as follows. Protein transport. Probably involved in vesicular traffic. This is Ras-related protein Rab-2-A (RAB2A) from Zea mays (Maize).